We begin with the raw amino-acid sequence, 116 residues long: Thioredoxin H-type (116 aa).

One can recognise a Thioredoxin domain in the interval 2–115 (AEEAQVIACH…HKIAVHAPIT (114 aa)). Active-site nucleophile residues include C39 and C42. The cysteines at positions 39 and 42 are disulfide-linked.

This sequence belongs to the thioredoxin family. Plant H-type subfamily.

The protein localises to the cytoplasm. Its function is as follows. Participates in various redox reactions through the reversible oxidation of the active center dithiol to a disulfide. The H form is known to activate a number of cytosolic enzymes. The chain is Thioredoxin H-type from Fagopyrum esculentum (Common buckwheat).